The following is a 447-amino-acid chain: Glutamate--tRNA ligase 1 (447 aa).

The 'HIGH' region signature appears at 10–20 (PSPTGMLHVGN). A 'KMSKS' region motif is present at residues 240 to 244 (KISKR). Residue lysine 243 participates in ATP binding.

The protein belongs to the class-I aminoacyl-tRNA synthetase family. Glutamate--tRNA ligase type 1 subfamily. In terms of assembly, monomer.

Its subcellular location is the cytoplasm. The enzyme catalyses tRNA(Glu) + L-glutamate + ATP = L-glutamyl-tRNA(Glu) + AMP + diphosphate. Catalyzes the attachment of glutamate to tRNA(Glu) in a two-step reaction: glutamate is first activated by ATP to form Glu-AMP and then transferred to the acceptor end of tRNA(Glu). This is Glutamate--tRNA ligase 1 from Rickettsia massiliae (strain Mtu5).